The following is a 376-amino-acid chain: Queuine tRNA-ribosyltransferase (376 aa).

Asp-93 serves as the catalytic Proton acceptor. Substrate contacts are provided by residues 93–97, Asp-147, Gln-190, and Gly-217; that span reads DSGGF. Positions 248–254 are RNA binding; that stretch reads GVGKPGD. Asp-267 acts as the Nucleophile in catalysis. 4 residues coordinate Zn(2+): Cys-305, Cys-307, Cys-310, and His-336.

It belongs to the queuine tRNA-ribosyltransferase family. In terms of assembly, homodimer. Within each dimer, one monomer is responsible for RNA recognition and catalysis, while the other monomer binds to the replacement base PreQ1. Zn(2+) serves as cofactor.

It carries out the reaction 7-aminomethyl-7-carbaguanine + guanosine(34) in tRNA = 7-aminomethyl-7-carbaguanosine(34) in tRNA + guanine. It participates in tRNA modification; tRNA-queuosine biosynthesis. Functionally, catalyzes the base-exchange of a guanine (G) residue with the queuine precursor 7-aminomethyl-7-deazaguanine (PreQ1) at position 34 (anticodon wobble position) in tRNAs with GU(N) anticodons (tRNA-Asp, -Asn, -His and -Tyr). Catalysis occurs through a double-displacement mechanism. The nucleophile active site attacks the C1' of nucleotide 34 to detach the guanine base from the RNA, forming a covalent enzyme-RNA intermediate. The proton acceptor active site deprotonates the incoming PreQ1, allowing a nucleophilic attack on the C1' of the ribose to form the product. After dissociation, two additional enzymatic reactions on the tRNA convert PreQ1 to queuine (Q), resulting in the hypermodified nucleoside queuosine (7-(((4,5-cis-dihydroxy-2-cyclopenten-1-yl)amino)methyl)-7-deazaguanosine). In Dinoroseobacter shibae (strain DSM 16493 / NCIMB 14021 / DFL 12), this protein is Queuine tRNA-ribosyltransferase.